The following is a 312-amino-acid chain: Non-structural protein 12A (312 aa).

Over residues 1–23 (MFKSGSGSLKRSGSISSVKSFSG) the composition is skewed to low complexity. Disordered stretches follow at residues 1 to 37 (MFKSGSGSLKRSGSISSVKSFSGDSEKGLPPISRGSV), 63 to 97 (VPEKTKSEGNLKNKSSVITGNFESSGPTNAHYNQN), and 114 to 162 (KGRG…TGDG). Positions 63-73 (VPEKTKSEGNL) are enriched in basic and acidic residues. Residues 74–97 (KNKSSVITGNFESSGPTNAHYNQN) show a composition bias toward polar residues. Positions 122–134 (DARHTATDSRLSQ) are enriched in basic and acidic residues.

The protein belongs to the phytoreovirus non-structural protein Pns12A family.

Its subcellular location is the host cytoplasm. In terms of biological role, constituent of viral factories. This is Non-structural protein 12A from Rice dwarf virus (isolate Fujian) (RDV).